Reading from the N-terminus, the 346-residue chain is MIETDRLIAPTAKEREDQLDRAVRPKVLADYVGQPAVREQMEIFICAAKKRREALDHTLVFGPPGLGKTTLANIIANEMGVSLKSTSGPVLEKAGDLAAMLTNLEAGDVLFIDEIHRLSPVVEEILYPAMEDFQLDIMIGEGPAARSIKLDLPPFTLVGATTRAGLLTSPLRDRFGIVQRLEFYNVKDLTHIVARSAALLGVSMEELGAAEIAKRSRGTPRIANRLLRRVRDFAEVKGDGRITSELADKALNMLNVDERGFDHMDRRLLLAMINNFDGGPVGVESLAAAISEDRGTIEDVIEPYLIQQGFMARTPRGRVLTTNAYLHFGLSMPKRLQESQGGEGIA.

The large ATPase domain (RuvB-L) stretch occupies residues 4–184 (TDRLIAPTAK…FGIVQRLEFY (181 aa)). ATP contacts are provided by residues arginine 24, glycine 65, lysine 68, threonine 69, threonine 70, 131–133 (EDF), arginine 174, tyrosine 184, and arginine 221. Threonine 69 contacts Mg(2+). Residues 185–255 (NVKDLTHIVA…LADKALNMLN (71 aa)) are small ATPAse domain (RuvB-S). Residues 258-346 (ERGFDHMDRR…QESQGGEGIA (89 aa)) form a head domain (RuvB-H) region. DNA-binding residues include arginine 294, arginine 313, and arginine 318.

This sequence belongs to the RuvB family. As to quaternary structure, homohexamer. Forms an RuvA(8)-RuvB(12)-Holliday junction (HJ) complex. HJ DNA is sandwiched between 2 RuvA tetramers; dsDNA enters through RuvA and exits via RuvB. An RuvB hexamer assembles on each DNA strand where it exits the tetramer. Each RuvB hexamer is contacted by two RuvA subunits (via domain III) on 2 adjacent RuvB subunits; this complex drives branch migration. In the full resolvosome a probable DNA-RuvA(4)-RuvB(12)-RuvC(2) complex forms which resolves the HJ.

It localises to the cytoplasm. The enzyme catalyses ATP + H2O = ADP + phosphate + H(+). Its function is as follows. The RuvA-RuvB-RuvC complex processes Holliday junction (HJ) DNA during genetic recombination and DNA repair, while the RuvA-RuvB complex plays an important role in the rescue of blocked DNA replication forks via replication fork reversal (RFR). RuvA specifically binds to HJ cruciform DNA, conferring on it an open structure. The RuvB hexamer acts as an ATP-dependent pump, pulling dsDNA into and through the RuvAB complex. RuvB forms 2 homohexamers on either side of HJ DNA bound by 1 or 2 RuvA tetramers; 4 subunits per hexamer contact DNA at a time. Coordinated motions by a converter formed by DNA-disengaged RuvB subunits stimulates ATP hydrolysis and nucleotide exchange. Immobilization of the converter enables RuvB to convert the ATP-contained energy into a lever motion, pulling 2 nucleotides of DNA out of the RuvA tetramer per ATP hydrolyzed, thus driving DNA branch migration. The RuvB motors rotate together with the DNA substrate, which together with the progressing nucleotide cycle form the mechanistic basis for DNA recombination by continuous HJ branch migration. Branch migration allows RuvC to scan DNA until it finds its consensus sequence, where it cleaves and resolves cruciform DNA. This is Holliday junction branch migration complex subunit RuvB from Cellvibrio japonicus (strain Ueda107) (Pseudomonas fluorescens subsp. cellulosa).